The following is a 324-amino-acid chain: MLEQVILFTILMGFLISVLLSPILIPFLRRLKFGQSIREEGPKSHQKKSGTPTMGGVMIILSIIVTTIVMTQKFSEISPEMVLLLFVTLGYGLLGFLDDYIKVVMKRNLGLTSKQKLIGQIIIAVVFYAVYHYYNFATDIRIPGTDLSFDLGWAYFILVLFMLVGGSNAVNLTDGLDGLLSGTAAIAFGAFAILAWNQSQYDVAIFSVAVVGAVLGFLVFNAHPAKVFMGDTGSLALGGAIVTIAILTKLEILLVIIGGVFVIETLSVILQVISFKTTGKRIFKMSPLHHHYELVGWSEWRVVVTFWAAGLLLAVLGIYIEVWL.

Transmembrane regions (helical) follow at residues 5–25, 50–70, 77–97, 117–137, 147–167, 176–196, 203–223, 227–247, 250–270, and 302–322; these read VILF…PILI, GTPT…TIVM, ISPE…LGFL, LIGQ…YNFA, LSFD…VGGS, LDGL…ILAW, VAIF…FNAH, VFMG…IAIL, LEIL…SVIL, and VVVT…YIEV.

The protein belongs to the glycosyltransferase 4 family. MraY subfamily. Requires Mg(2+) as cofactor.

It localises to the cell membrane. The enzyme catalyses UDP-N-acetyl-alpha-D-muramoyl-L-alanyl-gamma-D-glutamyl-meso-2,6-diaminopimeloyl-D-alanyl-D-alanine + di-trans,octa-cis-undecaprenyl phosphate = di-trans,octa-cis-undecaprenyl diphospho-N-acetyl-alpha-D-muramoyl-L-alanyl-D-glutamyl-meso-2,6-diaminopimeloyl-D-alanyl-D-alanine + UMP. Its pathway is cell wall biogenesis; peptidoglycan biosynthesis. Its function is as follows. Catalyzes the initial step of the lipid cycle reactions in the biosynthesis of the cell wall peptidoglycan: transfers peptidoglycan precursor phospho-MurNAc-pentapeptide from UDP-MurNAc-pentapeptide onto the lipid carrier undecaprenyl phosphate, yielding undecaprenyl-pyrophosphoryl-MurNAc-pentapeptide, known as lipid I. In Bacillus subtilis (strain 168), this protein is Phospho-N-acetylmuramoyl-pentapeptide-transferase.